Reading from the N-terminus, the 126-residue chain is Fluoride-specific ion channel FluC 2 (126 aa).

Transmembrane regions (helical) follow at residues 5–25, 44–64, 68–88, and 99–119; these read TALT…GSVL, GTLT…GLAL, AALL…TWML, and MVSA…AALL. Na(+) contacts are provided by G78 and T81.

Belongs to the fluoride channel Fluc/FEX (TC 1.A.43) family.

The protein localises to the cell membrane. It catalyses the reaction fluoride(in) = fluoride(out). Its activity is regulated as follows. Na(+) is not transported, but it plays an essential structural role and its presence is essential for fluoride channel function. Functionally, fluoride-specific ion channel. Important for reducing fluoride concentration in the cell, thus reducing its toxicity. The sequence is that of Fluoride-specific ion channel FluC 2 from Mycobacterium bovis (strain ATCC BAA-935 / AF2122/97).